We begin with the raw amino-acid sequence, 483 residues long: Attachment protein G3P (483 aa).

The signal sequence occupies residues 1–20; sequence MGLHYLFGFCLALFSFSAIA. Disordered stretches follow at residues 324 to 343 and 354 to 378; these read EVSD…TTTE and SETN…GSGS. Polar residues predominate over residues 326–343; that stretch reads SDNNSSQPSISVNETTTE. The helical transmembrane segment at 460–480 threads the bilayer; that stretch reads IIYFMVMASAYVLAAYITLGV.

The protein belongs to the inovirus G3P protein family. In terms of assembly, interacts with G6P; this interaction is required for proper integration of G3P and G6P into the virion. Interacts with G8P. Interacts with the tip of the host pilus.

The protein localises to the virion. It localises to the host membrane. Plays essential roles both in the penetration of the viral genome into the bacterial host via pilus retraction and in the extrusion process. During the initial step of infection, G3P mediates adsorption of the phage to its primary receptor, the tip of host type IV PAO pilus. Attachment of the phage causes pilus retraction bringing the viral particle into close proximity of the host cell inner membrane. Subsequent interaction with a secondary host entry receptor induces penetration of the viral DNA into the host cytoplasm. In the extrusion process, G3P mediates the release of the membrane-anchored virion from the cell via its C-terminal domain. This chain is Attachment protein G3P (III), found in Pseudomonas phage Pf3 (Bacteriophage Pf3).